The sequence spans 259 residues: BTB/POZ domain-containing protein KCTD4 (259 aa).

The segment at 1–22 (MEHKINRREKEKDYEGKHNSLE) is disordered. Residues 33 to 134 (TLMTLNVGGY…EVKSRWEKEQ (102 aa)) enclose the BTB domain.

The chain is BTB/POZ domain-containing protein KCTD4 (KCTD4) from Bos taurus (Bovine).